Consider the following 37-residue polypeptide: Large ribosomal subunit protein bL36 (37 aa).

Belongs to the bacterial ribosomal protein bL36 family.

The sequence is that of Large ribosomal subunit protein bL36 from Streptomyces griseus subsp. griseus (strain JCM 4626 / CBS 651.72 / NBRC 13350 / KCC S-0626 / ISP 5235).